Reading from the N-terminus, the 545-residue chain is Adenine deaminase (545 aa).

It belongs to the metallo-dependent hydrolases superfamily. Adenine deaminase family. It depends on Mn(2+) as a cofactor.

It catalyses the reaction adenine + H2O + H(+) = hypoxanthine + NH4(+). The sequence is that of Adenine deaminase from Salinibacter ruber (strain DSM 13855 / M31).